The primary structure comprises 296 residues: Nucleotide-binding protein SZO_12220 (296 aa).

Residue 13–20 (GMSGAGKT) coordinates ATP. 63–66 (DMRS) contacts GTP.

This sequence belongs to the RapZ-like family.

Its function is as follows. Displays ATPase and GTPase activities. In Streptococcus equi subsp. zooepidemicus (strain H70), this protein is Nucleotide-binding protein SZO_12220.